Reading from the N-terminus, the 232-residue chain is ATP synthase subunit a (232 aa).

6 helical membrane-spanning segments follow: residues 18 to 38 (LLFI…IAFI), 74 to 94 (WAGL…LGLF), 107 to 127 (TYSL…YLAF), 142 to 162 (ALIP…PIAL), 173 to 193 (GHLL…SLMV), and 195 to 215 (SIPI…VACI).

The protein belongs to the ATPase A chain family. As to quaternary structure, F-type ATPases have 2 components, CF(1) - the catalytic core - and CF(0) - the membrane proton channel. CF(1) has five subunits: alpha(3), beta(3), gamma(1), delta(1), epsilon(1). CF(0) has three main subunits: a, b and c.

Its subcellular location is the mitochondrion inner membrane. Its function is as follows. Mitochondrial membrane ATP synthase (F(1)F(0) ATP synthase or Complex V) produces ATP from ADP in the presence of a proton gradient across the membrane which is generated by electron transport complexes of the respiratory chain. F-type ATPases consist of two structural domains, F(1) - containing the extramembraneous catalytic core and F(0) - containing the membrane proton channel, linked together by a central stalk and a peripheral stalk. During catalysis, ATP synthesis in the catalytic domain of F(1) is coupled via a rotary mechanism of the central stalk subunits to proton translocation. Key component of the proton channel; it may play a direct role in the translocation of protons across the membrane. This chain is ATP synthase subunit a (ATP6), found in Paracentrotus lividus (Common sea urchin).